The chain runs to 160 residues: Lipoprotein signal peptidase (160 aa).

3 helical membrane-spanning segments follow: residues Val7–Val27, Gly61–Ile81, and Ala91–Phe111. Active-site residues include Asp117 and Asp135. Residues Ile133–Ala153 traverse the membrane as a helical segment.

The protein belongs to the peptidase A8 family.

It localises to the cell membrane. It catalyses the reaction Release of signal peptides from bacterial membrane prolipoproteins. Hydrolyzes -Xaa-Yaa-Zaa-|-(S,diacylglyceryl)Cys-, in which Xaa is hydrophobic (preferably Leu), and Yaa (Ala or Ser) and Zaa (Gly or Ala) have small, neutral side chains.. Its pathway is protein modification; lipoprotein biosynthesis (signal peptide cleavage). This protein specifically catalyzes the removal of signal peptides from prolipoproteins. The sequence is that of Lipoprotein signal peptidase from Geobacillus thermodenitrificans (strain NG80-2).